A 393-amino-acid chain; its full sequence is Chorismate synthase (393 aa).

NADP(+) contacts are provided by arginine 40 and arginine 46. FMN-binding positions include 129–131 (RSS), 249–250 (QA), glycine 301, 316–320 (KPIPT), and arginine 342.

This sequence belongs to the chorismate synthase family. As to quaternary structure, homotetramer. Requires FMNH2 as cofactor.

It catalyses the reaction 5-O-(1-carboxyvinyl)-3-phosphoshikimate = chorismate + phosphate. The protein operates within metabolic intermediate biosynthesis; chorismate biosynthesis; chorismate from D-erythrose 4-phosphate and phosphoenolpyruvate: step 7/7. Functionally, catalyzes the anti-1,4-elimination of the C-3 phosphate and the C-6 proR hydrogen from 5-enolpyruvylshikimate-3-phosphate (EPSP) to yield chorismate, which is the branch point compound that serves as the starting substrate for the three terminal pathways of aromatic amino acid biosynthesis. This reaction introduces a second double bond into the aromatic ring system. This Geotalea daltonii (strain DSM 22248 / JCM 15807 / FRC-32) (Geobacter daltonii) protein is Chorismate synthase.